The primary structure comprises 487 residues: Probable glutamate receptor (487 aa).

A signal peptide spans 1–23; that stretch reads MDKGLHFIFCVVTAVLLLRESSQ. Topologically, residues 24-169 are extracellular; sequence TGAMRNDDAM…FFHFLAPFSK (146 aa). An N-linked (GlcNAc...) asparagine glycan is attached at Asn-104. Residues 170–190 form a helical membrane-spanning segment; the sequence is ETWTGLLFAYVLTCVCLFLVA. Topologically, residues 191–235 are cytoplasmic; sequence RLSPCEWNEPKNEENHFTFLNSLWFGAGALTLQGVTPRPKAFSVR. A helical membrane pass occupies residues 236–256; it reads VIAAIWWLFTIALLAAYIANF. Over 257 to 419 the chain is Extracellular; the sequence is TALLSSGSEQ…EGWSPLQPQA (163 aa). Residues 420–440 form a helical membrane-spanning segment; the sequence is LGGLFLTLAIGLALGVIAAMV. The Cytoplasmic segment spans residues 441–487; it reads ELSNKSRHAAGHIKKSCCSIFTEEMCTRLRIKENTRQTQETSGRANA.

Belongs to the glutamate-gated ion channel (TC 1.A.10.1) family.

The protein resides in the cell membrane. It is found in the postsynaptic cell membrane. Its function is as follows. Receptor for glutamate. L-glutamate acts as an excitatory neurotransmitter at many synapses in the central nervous system. The postsynaptic actions of Glu are mediated by a variety of receptors that are named according to their selective agonists. In Gallus gallus (Chicken), this protein is Probable glutamate receptor (KBP).